Here is a 268-residue protein sequence, read N- to C-terminus: Thiazole synthase (268 aa).

K96 (schiff-base intermediate with DXP) is an active-site residue. Residues G157, 185 to 186 (AG), and 207 to 208 (NT) contribute to the 1-deoxy-D-xylulose 5-phosphate site. The disordered stretch occupies residues 238 to 268 (PMRPREAASPSSPVEGVPFTPTGPRPGRGPQ). A compositionally biased stretch (pro residues) spans 258 to 268 (PTGPRPGRGPQ).

The protein belongs to the ThiG family. Homotetramer. Forms heterodimers with either ThiH or ThiS.

It localises to the cytoplasm. The catalysed reaction is [ThiS sulfur-carrier protein]-C-terminal-Gly-aminoethanethioate + 2-iminoacetate + 1-deoxy-D-xylulose 5-phosphate = [ThiS sulfur-carrier protein]-C-terminal Gly-Gly + 2-[(2R,5Z)-2-carboxy-4-methylthiazol-5(2H)-ylidene]ethyl phosphate + 2 H2O + H(+). It functions in the pathway cofactor biosynthesis; thiamine diphosphate biosynthesis. Catalyzes the rearrangement of 1-deoxy-D-xylulose 5-phosphate (DXP) to produce the thiazole phosphate moiety of thiamine. Sulfur is provided by the thiocarboxylate moiety of the carrier protein ThiS. In vitro, sulfur can be provided by H(2)S. The polypeptide is Thiazole synthase (Thermus thermophilus (strain ATCC BAA-163 / DSM 7039 / HB27)).